Consider the following 98-residue polypeptide: NADH-ubiquinone oxidoreductase chain 4L (98 aa).

A run of 3 helical transmembrane segments spans residues 1 to 21, 28 to 48, and 59 to 79; these read MTPL…GVLI, STLL…SLLI, and APLI…ALLV.

The protein belongs to the complex I subunit 4L family. As to quaternary structure, core subunit of respiratory chain NADH dehydrogenase (Complex I) which is composed of 45 different subunits.

The protein resides in the mitochondrion inner membrane. It carries out the reaction a ubiquinone + NADH + 5 H(+)(in) = a ubiquinol + NAD(+) + 4 H(+)(out). Its function is as follows. Core subunit of the mitochondrial membrane respiratory chain NADH dehydrogenase (Complex I) which catalyzes electron transfer from NADH through the respiratory chain, using ubiquinone as an electron acceptor. Part of the enzyme membrane arm which is embedded in the lipid bilayer and involved in proton translocation. The protein is NADH-ubiquinone oxidoreductase chain 4L (MT-ND4L) of Tarsipes rostratus (Honey possum).